A 503-amino-acid chain; its full sequence is DnaJ homolog subfamily C member 3 (503 aa).

The signal sequence occupies residues 1-31 (MVSAAASAGRLGSALPFLLVLLDLQYQGAEC). 9 TPR repeats span residues 37–70 (VEKQ…DSDN), 71–104 (YIAY…KQDF), 105–137 (TSRL…NPSN), 153–186 (LQRL…CVWD), 187–220 (AELR…KSDN), 221–254 (TEAF…DQDH), 267–300 (LNKQ…EPDV), 305–338 (TRAK…EPTN), and 339–372 (VNAL…SEND). The cysteines at positions 247 and 257 are disulfide-linked. Cysteine 312 and cysteine 328 are joined by a disulfide. The tract at residues 374-392 (QIREGLERAQRMLKQSQKR) is flexible linker. The J domain maps to 393–461 (DYYKILGVKR…EMRRKFDAGE (69 aa)).

The protein resides in the endoplasmic reticulum. Its function is as follows. May be involved in the unfolded protein response (UPR) during ER stress. This Gallus gallus (Chicken) protein is DnaJ homolog subfamily C member 3 (DNAJC3).